Consider the following 240-residue polypeptide: Lysoplasmalogenase TMEM86A (240 aa).

Topologically, residues 1–21 (MVSPVTVVKSEGPKLVPFFKA) are cytoplasmic. The helical transmembrane segment at 22 to 42 (TCVYFVLWLPSSSPSWVSTLI) threads the bilayer. Residue lysine 43 is a topological domain, extracellular. The helical transmembrane segment at 44–64 (CLPIFCLWLFLLAHGLGFLLA) threads the bilayer. Residues 65-70 (HPSATR) are Cytoplasmic-facing. The chain crosses the membrane as a helical span at residues 71–91 (IFVGLVFSAVGDAFLIWQDQG). Residue tyrosine 92 is a topological domain, extracellular. Residues 93–113 (FVHGLLMFAVTHMFYASAFGM) form a helical membrane-spanning segment. Topologically, residues 114–115 (QP) are cytoplasmic. Residues 116–136 (LALRTGLVMAALSGLCYALLY) traverse the membrane as a helical segment. The Extracellular portion of the chain corresponds to 137-138 (PC). A helical transmembrane segment spans residues 139-159 (LSGAFTYLVGVYVALIGFMGW). Residues 160-174 (RAMAGLRLAGADWRW) are Cytoplasmic-facing. Residues 175–195 (TELAAGSGALFFIISDLTIAL) traverse the membrane as a helical segment. Over 196-206 (NKFCFPVPYSR) the chain is Extracellular. A helical transmembrane segment spans residues 207–227 (ALIMSTYYVAQMLVALSAVES). The Cytoplasmic segment spans residues 228–240 (REPVEHYRLTKAN).

It belongs to the TMEM86 family. In terms of tissue distribution, expressed in the macrophages.

The protein resides in the endoplasmic reticulum membrane. The enzyme catalyses a 1-O-(1Z-alkenyl)-sn-glycero-3-phosphocholine + H2O = a 2,3-saturated aldehyde + sn-glycerol 3-phosphocholine. It carries out the reaction a 1-O-(1Z-alkenyl)-sn-glycero-3-phosphoethanolamine + H2O = a 2,3-saturated aldehyde + sn-glycero-3-phosphoethanolamine. Catalyzes the hydrolysis of the vinyl ether bond of choline or ethanolamine lysoplasmalogens, forming fatty aldehyde and glycerophosphocholine or glycerophosphoethanolamine, respectively and is specific for the sn-2-deacylated (lyso) form of plasmalogen. Plays an important role in lysoplasmalogen metabolism in the adipocyte tissue and macrophages. The chain is Lysoplasmalogenase TMEM86A (TMEM86A) from Homo sapiens (Human).